The primary structure comprises 193 residues: uncharacterized protein (193 aa).

The helical transmembrane segment at 119–143 (LAGSLLAATGMTLGIFGMGITGTCW) threads the bilayer.

The protein localises to the mitochondrion membrane. This is an uncharacterized protein from Saccharomyces cerevisiae (strain ATCC 204508 / S288c) (Baker's yeast).